We begin with the raw amino-acid sequence, 461 residues long: pre-mRNA splicing regulator USH1G (461 aa).

ANK repeat units lie at residues aspartate 31–lysine 60, tryptophan 64–cysteine 93, and aspartate 97–serine 126. Positions leucine 329–cysteine 368 are disordered. In terms of domain architecture, SAM spans leucine 385–arginine 447. Serine 422 is subject to Phosphoserine.

As to quaternary structure, part of a complex composed of USH1C, USH1G and MYO7A. Interacts with USH1C (via the first PDZ domain). Interacts with PDZD7. Interacts with CDH23 and PCDH15; these interactions may recruit USH1G to the plasma membrane. Interacts with intraflagellar transport proteins IFT20, IFT52 and IFT57. Interacts with splicing factors SF3B1, PRPF6, PRPF31 and SON. Interacts with the U4/U6.U5 tri-small nuclear ribonucleoprotein (tri-snRNP) complex in the presence of pre-mRNAs. Interacts (via SAM domain) with MAGI2 (via PDZ 6 domain); the interaction is triggered by phosphorylation of USH1G by CK2 and negatively regulates MAGI2-mediated endocytosis. In terms of tissue distribution, detected in stereocilia from cochlear hair cells (at protein level). Detected in retinal photoreceptor cell cilia (at protein level). Highly expressed in the cochlea, testis, cerebellum and eye, and low levels in brain, thymus and spleen. Significant signals detected in the neurosensory epithelium of inner ear cochlea and saccule, especially in inner and outer hair cells.

It localises to the cytoplasm. The protein resides in the cytosol. Its subcellular location is the cytoskeleton. The protein localises to the cell membrane. It is found in the cell projection. It localises to the cilium. The protein resides in the nucleus speckle. Its subcellular location is the nucleus. The protein localises to the cajal body. It is found in the microtubule organizing center. It localises to the centrosome. The protein resides in the photoreceptor inner segment. Its function is as follows. Plays a role in pre-mRNA splicing by regulating the release and transfer of U4/U6.U5 tri-small nuclear ribonucleoprotein (tri-snRNP) complexes from their assembly site in Cajal bodies to nuclear speckles, thereby contributing to the assembly of the pre-catalytic spliceosome on target pre-mRNAs. May also participate in recycling of snRNPs back to Cajal bodies during splicing. Plays a role in regulating MAGI2-mediated endocytosis. Anchoring/scaffolding protein that is a part of the functional network formed by USH1C, USH1G, CDH23 and MYO7A that mediates mechanotransduction in cochlear hair cells. Required for normal development and maintenance of cochlear hair cell bundles. Required for normal hearing. This Mus musculus (Mouse) protein is pre-mRNA splicing regulator USH1G (Ush1g).